We begin with the raw amino-acid sequence, 394 residues long: Olfactomedin-like protein 3B (394 aa).

An N-terminal signal peptide occupies residues 1-18 (MKATIFFLLLTVLAHSRS). A coiled-coil region spans residues 29–94 (LENRMLAMEE…RVDRVEREMD (66 aa)). An Olfactomedin-like domain is found at 132–383 (VCVNIISSLK…QILYKLELKK (252 aa)). Cysteines 133 and 310 form a disulfide. N-linked (GlcNAc...) asparagine glycans are attached at residues asparagine 169, asparagine 204, and asparagine 233.

It belongs to the OLFML3 family.

Its subcellular location is the secreted. Its function is as follows. Secreted scaffold protein that plays an essential role in dorsoventral patterning during early development. Stabilizes axial formation by restricting chordin (CHRD) activity on the dorsal side. Acts by facilitating the association between the tolloid proteases and their substrate chordin (CHRD), leading to enhance chordin (CHRD) degradation. In Danio rerio (Zebrafish), this protein is Olfactomedin-like protein 3B (olfml3b).